The chain runs to 166 residues: Phospholipase A2 myotoxin inhibitor protein (166 aa).

The N-terminal stretch at 1–19 (MRLILLSGLLLLGTFLANG) is a signal peptide. The C-type lectin domain occupies 46 to 161 (LKYAFLTVHK…CDDNLLVVCE (116 aa)). 2 disulfide bridges follow: Cys83–Cys160 and Cys138–Cys152. Residue Asn122 is glycosylated (N-linked (GlcNAc...) asparagine).

This sequence belongs to the alpha-type phospholipase A2 inhibitor family. In terms of assembly, oligomer. Homotrimer; non-covalently linked. In terms of processing, glycosylated. The glycosylation has no role in the association of this PLI and PA2 enzyme. Expressed by the liver.

The protein localises to the secreted. Its function is as follows. This phospholipase A2 inhibitor binds directly phospholipase A2 in the presence or absence of calcium. Has anti-enzymatic, anti-myotoxic, anti-edema inducing, anti-cytotoxic, anti-bactericidal, and anti-lethal properties against basic and acidic phospholipases A2 from Bothrops venoms. This is Phospholipase A2 myotoxin inhibitor protein from Bothrops moojeni (Lance-headed viper).